Reading from the N-terminus, the 524-residue chain is Chromosomal replication initiator protein DnaA (524 aa).

A domain I, interacts with DnaA modulators region spans residues methionine 1–glutamine 105. A disordered region spans residues proline 95–serine 183. Residues glutamine 106–valine 182 form a domain II region. Positions alanine 148–aspartate 158 are enriched in pro residues. A domain III, AAA+ region region spans residues serine 183–serine 399. The ATP site is built by glycine 227, glycine 229, lysine 230, and threonine 231. The tract at residues serine 400 to asparagine 524 is domain IV, binds dsDNA.

The protein belongs to the DnaA family. As to quaternary structure, oligomerizes as a right-handed, spiral filament on DNA at oriC.

The protein localises to the cytoplasm. In terms of biological role, plays an essential role in the initiation and regulation of chromosomal replication. ATP-DnaA binds to the origin of replication (oriC) to initiate formation of the DNA replication initiation complex once per cell cycle. Binds the DnaA box (a 9 base pair repeat at the origin) and separates the double-stranded (ds)DNA. Forms a right-handed helical filament on oriC DNA; dsDNA binds to the exterior of the filament while single-stranded (ss)DNA is stabiized in the filament's interior. The ATP-DnaA-oriC complex binds and stabilizes one strand of the AT-rich DNA unwinding element (DUE), permitting loading of DNA polymerase. After initiation quickly degrades to an ADP-DnaA complex that is not apt for DNA replication. Binds acidic phospholipids. The chain is Chromosomal replication initiator protein DnaA from Corynebacterium glutamicum (strain R).